The primary structure comprises 65 residues: Lantibiotic lacticin 3147 A2 (65 aa).

Positions 1–36 (MKEKNMKKNDTIELQLGKYLEDDMIELAEGDESHGG) are excised as a propeptide. A 2-oxobutanoic acid modification is found at threonine 37. A 2,3-didehydrobutyrine mark is found at threonine 38 and threonine 41. 2,3-didehydroalanine (Ser) occurs at positions 45 and 48. The lanthionine (Ser-Cys) cross-link spans 52–56 (STNTC). Cross-links (beta-methyllanthionine (Thr-Cys)) lie at residues 58–61 (TTKC) and 62–65 (TRAC).

Post-translationally, maturation of lantibiotics involves the enzymatic conversion of Thr, and Ser into dehydrated AA and the formation of thioether bonds with cysteine. This is followed by membrane translocation and cleavage of the modified precursor. It is not established whether the 2,3-didehydrobutyrines are the E- or Z-isomers. In the NMR model they were assumed to be the Z-isomer.

The protein resides in the secreted. Its function is as follows. Lanthionine-containing peptide antibiotic (lantibiotic) active on Gram-positive bacteria. The bactericidal activity of lantibiotics is based on depolarization of energized bacterial cytoplasmic membranes, initiated by the formation of aqueous transmembrane pores. When present individually lacticin 3147 A2 exhibits weak activity towards L.lactis strain AM2 and L.lactis strain HP, and no activity towards L.lactis strain IFPL359, but when combined with lacticin 3147 A1 it displays strong activity towards all three strains. This Lactococcus lactis subsp. lactis (Streptococcus lactis) protein is Lantibiotic lacticin 3147 A2.